The primary structure comprises 338 residues: MHIAALHQPSQVQLNQDGNLKHFLTIEGLSKENLTKILDTAQSFLDDNNNLINRPLLEGRTVMNLFFENSTRTRTTFEAAAKRLSANVLNIDIARSSTSKGETLRDTLWNLEAMAADIFVVRHSSSGAAHFIAKDVCPKVAIINAGDGRHAHPTQAMLDMLTIRRETKKPFEDLSVAIIGDIKHSRVARSDVAALQTLGCKDIRVIAPNTLLPVGFSEYGDHVRLFNNMDEGITGCDVIIALRIQNERIDSPALSSQSEFYRMYGLNKERLSLAKPDCIVMHPGPMNRGVEIDSSIADGEQSVILKQVTNGIAVRMAVLALSMQGQLQEQGLIEAIAL.

Positions 72 and 73 each coordinate carbamoyl phosphate. K100 serves as a coordination point for L-aspartate. R122, H152, and Q155 together coordinate carbamoyl phosphate. Residues R186 and R243 each contribute to the L-aspartate site. The carbamoyl phosphate site is built by G284 and P285.

This sequence belongs to the aspartate/ornithine carbamoyltransferase superfamily. ATCase family. Heterododecamer (2C3:3R2) of six catalytic PyrB chains organized as two trimers (C3), and six regulatory PyrI chains organized as three dimers (R2).

The catalysed reaction is carbamoyl phosphate + L-aspartate = N-carbamoyl-L-aspartate + phosphate + H(+). It functions in the pathway pyrimidine metabolism; UMP biosynthesis via de novo pathway; (S)-dihydroorotate from bicarbonate: step 2/3. Functionally, catalyzes the condensation of carbamoyl phosphate and aspartate to form carbamoyl aspartate and inorganic phosphate, the committed step in the de novo pyrimidine nucleotide biosynthesis pathway. The sequence is that of Aspartate carbamoyltransferase catalytic subunit from Acinetobacter baumannii (strain ACICU).